Here is a 511-residue protein sequence, read N- to C-terminus: Mesoderm induction early response protein 1 (511 aa).

Over residues 1–16 (MAEPSVESSSPGGSAT) the composition is skewed to low complexity. The interval 1–171 (MAEPSVESSS…EEESEEDEDY (171 aa)) is disordered. A Phosphoserine modification is found at Ser-10. Residues 17-36 (SEDHEFDPSADMLVHDFDDE) are compositionally biased toward basic and acidic residues. The segment covering 37–46 (RTLEEEEMME) has biased composition (acidic residues). The segment covering 57-66 (DLAREGDMPI) has biased composition (basic and acidic residues). Over residues 83-104 (EEEEEEEEEEEGEDDEDADNDD) the composition is skewed to acidic residues. Polar residues predominate over residues 128 to 143 (QSSNDDPSQSVTSQDA). Residue Ser-140 is modified to Phosphoserine. Tyr-154 bears the Phosphotyrosine mark. Phosphoserine occurs at positions 159 and 165. Residues 159 to 171 (SEIEEESEEDEDY) are compositionally biased toward acidic residues. One can recognise an ELM2 domain in the interval 179-277 (KEIMVGSMFQ…EALRRLRFNV (99 aa)). A Glycyl lysine isopeptide (Lys-Gly) (interchain with G-Cter in SUMO2) cross-link involves residue Lys-238. Residues 282-334 (EELSVWTEEECRNFEQGLKAYGKDFHLIQANKVRTRSVGECVAFYYMWKKSER) enclose the SANT domain. The disordered stretch occupies residues 365–511 (ESESAASSRA…KFEEHENTND (147 aa)). Phosphoserine occurs at positions 366, 368, and 376. Residues 397-408 (SSRNQNGVSSNG) are compositionally biased toward polar residues. Basic and acidic residues-rich tracts occupy residues 413–422 (LNKEEVKVEG) and 461–474 (ARNE…NERP). Residue Lys-419 forms a Glycyl lysine isopeptide (Lys-Gly) (interchain with G-Cter in SUMO2) linkage. The segment covering 481–493 (NSSGKESPGSSEF) has biased composition (polar residues). A phosphoserine mark is found at Ser-482, Ser-487, and Ser-490. Residues 499 to 511 (SHGKFEEHENTND) are compositionally biased toward basic and acidic residues.

As to quaternary structure, interacts with HDAC1. Part of a complex containing at least CDYL, MIER1, MIER2, HDAC1 and HDAC2. In terms of tissue distribution, ubiquitously expressed. Isoform 1 is only expressed in testis.

It is found in the nucleus. Functionally, transcriptional repressor regulating the expression of a number of genes including SP1 target genes. Probably functions through recruitment of HDAC1 a histone deacetylase involved in chromatin silencing. This Mus musculus (Mouse) protein is Mesoderm induction early response protein 1 (Mier1).